Consider the following 413-residue polypeptide: Putative F-box protein At3g17560 (413 aa).

In terms of domain architecture, F-box spans 9 to 55; it reads TKLLFDLPQDVIEEIFSKVPVTCLRRIRSTCKRLYALLKDRGFIRKH.

This is Putative F-box protein At3g17560 from Arabidopsis thaliana (Mouse-ear cress).